Consider the following 204-residue polypeptide: Synaptosomal-associated protein 25-A (204 aa).

The span at 1-11 (MAEDSDMRNEL) shows a compositional bias: basic and acidic residues. The disordered stretch occupies residues 1–25 (MAEDSDMRNELADMQQRADQLADES). 2 consecutive t-SNARE coiled-coil homology domains span residues 19-81 (DQLA…LNDL) and 138-200 (DARE…ATKM).

The protein belongs to the SNAP-25 family. In terms of tissue distribution, expressed in several regions throughout the adult brain, including the mesencephalon.

Its subcellular location is the synapse. It localises to the synaptosome. It is found in the cell membrane. In terms of biological role, may play an important role in the synaptic function of specific neuronal systems. Associates with proteins involved in vesicle docking and membrane fusion. The polypeptide is Synaptosomal-associated protein 25-A (Danio rerio (Zebrafish)).